The following is a 483-amino-acid chain: Glutamate--tRNA ligase (483 aa).

Residues 9–19 (PSPTGFLHIGN) carry the 'HIGH' region motif. Residues 253-257 (KLSKR) carry the 'KMSKS' region motif. Lys256 contacts ATP.

Belongs to the class-I aminoacyl-tRNA synthetase family. Glutamate--tRNA ligase type 1 subfamily. In terms of assembly, monomer.

Its subcellular location is the cytoplasm. The enzyme catalyses tRNA(Glu) + L-glutamate + ATP = L-glutamyl-tRNA(Glu) + AMP + diphosphate. Its function is as follows. Catalyzes the attachment of glutamate to tRNA(Glu) in a two-step reaction: glutamate is first activated by ATP to form Glu-AMP and then transferred to the acceptor end of tRNA(Glu). In Mycoplasma mycoides subsp. mycoides SC (strain CCUG 32753 / NCTC 10114 / PG1), this protein is Glutamate--tRNA ligase.